Reading from the N-terminus, the 523-residue chain is (R)-citramalate synthase (523 aa).

Residues 6–272 (VEVLDTTLRD…KGNESLKKLK (267 aa)) form the Pyruvate carboxyltransferase domain.

Belongs to the alpha-IPM synthase/homocitrate synthase family.

It carries out the reaction pyruvate + acetyl-CoA + H2O = (3R)-citramalate + CoA + H(+). The protein operates within amino-acid biosynthesis; L-isoleucine biosynthesis; 2-oxobutanoate from pyruvate: step 1/3. Inhibited by isoleucine. Functionally, catalyzes the condensation of pyruvate and acetyl-coenzyme A to form (R)-citramalate. Makes part of a pathway for isoleucine biosynthesis, i.e. the citramalate-dependent pathway. Also displays a low alpha-isopropylmalate synthase activity, using 2-oxoisovalerate as substrate, but is unable to use 2-oxoglutarate. The chain is (R)-citramalate synthase from Sulfolobus acidocaldarius (strain ATCC 33909 / DSM 639 / JCM 8929 / NBRC 15157 / NCIMB 11770).